Reading from the N-terminus, the 382-residue chain is Galactokinase (382 aa).

Position 34–37 (34–37 (EHTD)) interacts with substrate. 124–130 (GAGLSSS) provides a ligand contact to ATP. 2 residues coordinate Mg(2+): Ser-130 and Glu-162. Catalysis depends on Asp-174, which acts as the Proton acceptor. Tyr-223 contacts substrate.

This sequence belongs to the GHMP kinase family. GalK subfamily.

Its subcellular location is the cytoplasm. It carries out the reaction alpha-D-galactose + ATP = alpha-D-galactose 1-phosphate + ADP + H(+). It functions in the pathway carbohydrate metabolism; galactose metabolism. Functionally, catalyzes the transfer of the gamma-phosphate of ATP to D-galactose to form alpha-D-galactose-1-phosphate (Gal-1-P). This Escherichia fergusonii (strain ATCC 35469 / DSM 13698 / CCUG 18766 / IAM 14443 / JCM 21226 / LMG 7866 / NBRC 102419 / NCTC 12128 / CDC 0568-73) protein is Galactokinase.